Consider the following 281-residue polypeptide: Putrescine transport system permease protein PotI (281 aa).

Residues 1–13 (MNNLPVVRSPWRI) lie on the Cytoplasmic side of the membrane. Residues 14–33 (VILLLGFTFLYAPMLMLVIY) traverse the membrane as a helical segment. Residues 34-68 (SFNSSKLVTVWAGWSTRWYGELLRDDAMMSAVGLS) are Periplasmic-facing. The 196-residue stretch at 65 to 260 (VGLSLTIAAC…GAVGIVGFIA (196 aa)) folds into the ABC transmembrane type-1 domain. Residues 69–88 (LTIAACAATAAAILGTIAAV) traverse the membrane as a helical segment. Residues 89-115 (VLVRFGRFRGSNGFAFMITAPLVMPDV) are Cytoplasmic-facing. A helical membrane pass occupies residues 116–135 (ITGLSLLLLFVALAHAIGWP). The Periplasmic segment spans residues 136 to 140 (ADRGM). Residues 141-160 (LTIWLAHVTFCTAYVAVVIS) form a helical membrane-spanning segment. Residues 161–186 (SRLRELDRSIEEAAMDLGATPLKVFF) are Cytoplasmic-facing. Residues 187 to 206 (VITLPMIMPAIISGWLLAFT) form a helical membrane-spanning segment. The Periplasmic segment spans residues 207–243 (LSLDDLVIASFVSGPGATTLPMLVFSSVRMGVNPEIN). The chain crosses the membrane as a helical span at residues 244–263 (ALATLILGAVGIVGFIAWYL). Residues 264–281 (MARAEKQRIRDIQRARRG) lie on the Cytoplasmic side of the membrane.

It belongs to the binding-protein-dependent transport system permease family. CysTW subfamily. As to quaternary structure, the complex is composed of two ATP-binding proteins (PotG), two transmembrane proteins (PotH and PotI) and a solute-binding protein (PotF).

Its subcellular location is the cell inner membrane. Functionally, part of the ABC transporter complex PotFGHI involved in putrescine uptake. Responsible for the translocation of the substrate across the membrane. This is Putrescine transport system permease protein PotI from Escherichia coli O6:H1 (strain CFT073 / ATCC 700928 / UPEC).